A 207-amino-acid chain; its full sequence is 8-oxoguanine DNA glycosylase/AP lyase (207 aa).

Active-site residues include Lys-128 and Asp-146.

It belongs to the type-2 OGG1 family.

It carries out the reaction 2'-deoxyribonucleotide-(2'-deoxyribose 5'-phosphate)-2'-deoxyribonucleotide-DNA = a 3'-end 2'-deoxyribonucleotide-(2,3-dehydro-2,3-deoxyribose 5'-phosphate)-DNA + a 5'-end 5'-phospho-2'-deoxyribonucleoside-DNA + H(+). In terms of biological role, catalyzes the excision of an oxidatively damaged form of guanine (7,8-dihydro-8-oxoguanine = 8-oxoG) from DNA. Also cleaves the DNA backbone at apurinic/apyrimidinic sites (AP sites). This chain is 8-oxoguanine DNA glycosylase/AP lyase, found in Saccharolobus islandicus (strain Y.N.15.51 / Yellowstone #2) (Sulfolobus islandicus).